Consider the following 112-residue polypeptide: Ciliary microtubule inner protein 3 (112 aa).

The tract at residues 1–34 (MCKDSQKPSVPSHGPKTPSCKGVKAPHSSRPRAW) is disordered.

The protein belongs to the CIMIP3-like family.

Its subcellular location is the cytoplasm. It localises to the cytoskeleton. The protein resides in the flagellum axoneme. The protein is Ciliary microtubule inner protein 3 of Homo sapiens (Human).